We begin with the raw amino-acid sequence, 468 residues long: MKMPLNIGLVHFIGIGGIGMSGIAEVLHNLGYHVQGSDQSDSANVQRLREKGIEVFVGHKAENIGDAEVVVVSTAIKKNNPELVAAREKLLPIVRRAEMLAELMRFRHAVAIGGTHGKTTTTSMVAALLDAGHLDPTVINGGIINAYGTNARMGDGDWMVVEADESDGTFLKLPADIAVVTNIDPEHLDHYGNFENVRAAFAQFVENVPFYGFGVMCLDHPEVQALVSRIEDRRIVTYGQNPQADVRFVNHRMDGAASLFDVVIRSRKGEATEIKDLRLPMPGQHNVSNATAAIAVAHELGISADDIRRGLGSFGGVKRRFTHTGTWNGVEIFDDYGHHPVEIRAVLKAAREATKGRVVAIVQPHRYTRLASLFDEFAACFNDADTVIVTPVYTAGEDPIEGVNSEALVSRIKTAGHRDARYASGPEALAPLVASIAEPGDFVVCLGAGNITQWAYALPKELAEQGKK.

Residue 114-120 (GTHGKTT) participates in ATP binding.

The protein belongs to the MurCDEF family.

It localises to the cytoplasm. It catalyses the reaction UDP-N-acetyl-alpha-D-muramate + L-alanine + ATP = UDP-N-acetyl-alpha-D-muramoyl-L-alanine + ADP + phosphate + H(+). Its pathway is cell wall biogenesis; peptidoglycan biosynthesis. In terms of biological role, cell wall formation. The protein is UDP-N-acetylmuramate--L-alanine ligase of Brucella anthropi (strain ATCC 49188 / DSM 6882 / CCUG 24695 / JCM 21032 / LMG 3331 / NBRC 15819 / NCTC 12168 / Alc 37) (Ochrobactrum anthropi).